Reading from the N-terminus, the 150-residue chain is MQIILLEKVANLGNLGDIVKVKDGYARNFLIPNRKARRATKEAIAEFEVRRAELEKIAAEKLAASQAVGEKLNGQAFEVTQKSGVDGRLFGSVTNGDVAELLKKAGFEVEKLQVRMPEGPLKMIGEHVVQVALHTDVVVDVTINVIGDHA.

This sequence belongs to the bacterial ribosomal protein bL9 family.

Binds to the 23S rRNA. This is Large ribosomal subunit protein bL9 from Burkholderia vietnamiensis (strain G4 / LMG 22486) (Burkholderia cepacia (strain R1808)).